Consider the following 117-residue polypeptide: Non-specific lipid-transfer protein 1 (117 aa).

A signal peptide spans 1–26; it reads MAYSAMTKLALVVALCMVVSVPIAQA. Intrachain disulfides connect Cys29–Cys76, Cys39–Cys53, Cys54–Cys99, and Cys74–Cys113.

It belongs to the plant LTP family.

Plant non-specific lipid-transfer proteins transfer phospholipids as well as galactolipids across membranes. May play a role in wax or cutin deposition in the cell walls of expanding epidermal cells and certain secretory tissues. The protein is Non-specific lipid-transfer protein 1 of Prunus dulcis (Almond).